Here is a 539-residue protein sequence, read N- to C-terminus: uncharacterized protein (539 aa).

5 helical membrane passes run 4 to 22 (LVEN…GLLL), 27 to 46 (IFGF…ALST), 56 to 78 (LIYV…PGFF), 90 to 112 (ALTL…VLNI), and 155 to 177 (PVVA…IAIF). RCK C-terminal domains are found at residues 187–269 (KEAE…AIGE) and 271–352 (IDGD…LLGD). 4 helical membrane-spanning segments follow: residues 360-382 (FNLL…EFPL), 422-444 (LALR…GAGF), 453-475 (SLTI…LFVG), and 516-538 (YTSV…LFLL).

It belongs to the AAE transporter (TC 2.A.81) family.

It localises to the cell membrane. This is an uncharacterized protein from Corynebacterium glutamicum (strain ATCC 13032 / DSM 20300 / JCM 1318 / BCRC 11384 / CCUG 27702 / LMG 3730 / NBRC 12168 / NCIMB 10025 / NRRL B-2784 / 534).